A 289-amino-acid polypeptide reads, in one-letter code: Diaminopimelate epimerase (289 aa).

2 residues coordinate substrate: asparagine 11 and asparagine 78. Cysteine 87 (proton donor) is an active-site residue. Residues 88–89 (GN), asparagine 163, asparagine 199, and 217–218 (ER) contribute to the substrate site. Cysteine 226 serves as the catalytic Proton acceptor. 227 to 228 (GT) serves as a coordination point for substrate.

This sequence belongs to the diaminopimelate epimerase family. Homodimer.

The protein localises to the cytoplasm. It carries out the reaction (2S,6S)-2,6-diaminopimelate = meso-2,6-diaminopimelate. Its pathway is amino-acid biosynthesis; L-lysine biosynthesis via DAP pathway; DL-2,6-diaminopimelate from LL-2,6-diaminopimelate: step 1/1. Functionally, catalyzes the stereoinversion of LL-2,6-diaminopimelate (L,L-DAP) to meso-diaminopimelate (meso-DAP), a precursor of L-lysine and an essential component of the bacterial peptidoglycan. This chain is Diaminopimelate epimerase, found in Rhodococcus jostii (strain RHA1).